Consider the following 302-residue polypeptide: Haloalkane dehalogenase (302 aa).

The region spanning Pro48–Ile152 is the AB hydrolase-1 domain. Residue Asp123 is the Nucleophile of the active site. Asp249 acts as the Proton donor in catalysis. His278 serves as the catalytic Proton acceptor.

This sequence belongs to the haloalkane dehalogenase family. Type 1 subfamily. Monomer.

It catalyses the reaction 1-haloalkane + H2O = a halide anion + a primary alcohol + H(+). In terms of biological role, catalyzes hydrolytic cleavage of carbon-halogen bonds in halogenated aliphatic compounds, leading to the formation of the corresponding primary alcohols, halide ions and protons. The chain is Haloalkane dehalogenase from Caulobacter vibrioides (strain ATCC 19089 / CIP 103742 / CB 15) (Caulobacter crescentus).